The chain runs to 979 residues: Disks large-associated protein 3 (979 aa).

Positions Met1–Ser10 are enriched in basic and acidic residues. Disordered stretches follow at residues Met1–Gln20, Ala52–Gly95, Phe136–Arg169, Ala182–Gly291, Ala400–Ser429, and Phe537–Ser581. Residue Ser58 is modified to Phosphoserine. Residues Pro73–Ser86 are compositionally biased toward gly residues. Basic and acidic residues predominate over residues Pro190–Gly202. Positions Arg203–Gly218 are enriched in gly residues. Residues Thr221–Asp246 are compositionally biased toward basic residues. Phosphoserine occurs at positions 406, 409, 412, and 416. Residues Ala540 to Gln549 show a composition bias toward pro residues. Residues Ser643 and Ser645 each carry the phosphoserine modification. Disordered stretches follow at residues Glu741 to Pro790 and Glu908 to Arg940. 2 stretches are compositionally biased toward basic and acidic residues: residues Gly769–Ser779 and Pro927–Arg940. Phosphoserine occurs at positions 932, 935, and 967.

The protein belongs to the SAPAP family. As to quaternary structure, interacts with DLG4/PSD-95.

Its subcellular location is the cell membrane. The protein resides in the postsynaptic density. It localises to the synapse. Functionally, may play a role in the molecular organization of synapses and neuronal cell signaling. Could be an adapter protein linking ion channel to the subsynaptic cytoskeleton. May induce enrichment of PSD-95/SAP90 at the plasma membrane. The protein is Disks large-associated protein 3 (DLGAP3) of Homo sapiens (Human).